The chain runs to 98 residues: NADH-ubiquinone oxidoreductase chain 4L (98 aa).

The next 3 helical transmembrane spans lie at 1–21, 29–49, and 61–81; these read MPFI…GLLI, SLLC…LMTL, and IVLL…LVLI.

The protein belongs to the complex I subunit 4L family. In terms of assembly, core subunit of respiratory chain NADH dehydrogenase (Complex I) which is composed of 45 different subunits.

The protein localises to the mitochondrion inner membrane. The catalysed reaction is a ubiquinone + NADH + 5 H(+)(in) = a ubiquinol + NAD(+) + 4 H(+)(out). Core subunit of the mitochondrial membrane respiratory chain NADH dehydrogenase (Complex I) which catalyzes electron transfer from NADH through the respiratory chain, using ubiquinone as an electron acceptor. Part of the enzyme membrane arm which is embedded in the lipid bilayer and involved in proton translocation. This chain is NADH-ubiquinone oxidoreductase chain 4L (MT-ND4L), found in Aotus trivirgatus (Three-striped night monkey).